The chain runs to 709 residues: Phosphate acetyltransferase (709 aa).

The phosphate acetyltransferase stretch occupies residues 389–709 (EFCYRLKILS…TIALTSIQSL (321 aa)).

It in the N-terminal section; belongs to the CobB/CobQ family. This sequence in the C-terminal section; belongs to the phosphate acetyltransferase and butyryltransferase family. In terms of assembly, homohexamer.

Its subcellular location is the cytoplasm. The enzyme catalyses acetyl-CoA + phosphate = acetyl phosphate + CoA. It participates in metabolic intermediate biosynthesis; acetyl-CoA biosynthesis; acetyl-CoA from acetate: step 2/2. Its function is as follows. Involved in acetate metabolism. The chain is Phosphate acetyltransferase (pta) from Buchnera aphidicola subsp. Schizaphis graminum (strain Sg).